The following is a 471-amino-acid chain: ATP synthase subunit beta (471 aa).

154 to 161 (GGAGVGKT) is a binding site for ATP.

Belongs to the ATPase alpha/beta chains family. F-type ATPases have 2 components, CF(1) - the catalytic core - and CF(0) - the membrane proton channel. CF(1) has five subunits: alpha(3), beta(3), gamma(1), delta(1), epsilon(1). CF(0) has three main subunits: a(1), b(2) and c(9-12). The alpha and beta chains form an alternating ring which encloses part of the gamma chain. CF(1) is attached to CF(0) by a central stalk formed by the gamma and epsilon chains, while a peripheral stalk is formed by the delta and b chains.

The protein localises to the cell membrane. It carries out the reaction ATP + H2O + 4 H(+)(in) = ADP + phosphate + 5 H(+)(out). Its function is as follows. Produces ATP from ADP in the presence of a proton gradient across the membrane. The catalytic sites are hosted primarily by the beta subunits. In Mesomycoplasma hyopneumoniae (strain J / ATCC 25934 / NCTC 10110) (Mycoplasma hyopneumoniae), this protein is ATP synthase subunit beta.